Consider the following 321-residue polypeptide: Annexin A5 (321 aa).

Residue A2 is modified to N-acetylalanine. 4 Annexin repeats span residues 15–86, 87–158, 170–242, and 246–317; these read FDER…ALMK, PSRL…VLLQ, AQVE…AVVK, and SIPA…LLCG. Residue K29 forms a Glycyl lysine isopeptide (Lys-Gly) (interchain with G-Cter in SUMO1); alternate linkage. Residue K29 forms a Glycyl lysine isopeptide (Lys-Gly) (interchain with G-Cter in SUMO2); alternate linkage. 5 positions are modified to N6-acetyllysine: K70, K76, K79, K97, and K101. At K290 the chain carries N6-succinyllysine. The [IL]-x-C-x-x-[DE] motif signature appears at 314-320; the sequence is LLCGGED.

This sequence belongs to the annexin family. As to quaternary structure, monomer. Binds ATRX and EIF5B. Post-translationally, S-nitrosylation is induced by interferon-gamma and oxidatively-modified low-densitity lipoprotein (LDL(ox)) possibly implicating the iNOS-S100A8/9 transnitrosylase complex.

This protein is an anticoagulant protein that acts as an indirect inhibitor of the thromboplastin-specific complex, which is involved in the blood coagulation cascade. This chain is Annexin A5 (ANXA5), found in Bos taurus (Bovine).